The following is a 203-amino-acid chain: Small ribosomal subunit protein uS4c (203 aa).

The region spanning 91–154 (MRLDNIIFRL…KYESIISKNI (64 aa)) is the S4 RNA-binding domain.

The protein belongs to the universal ribosomal protein uS4 family. As to quaternary structure, part of the 30S ribosomal subunit. Contacts protein S5. The interaction surface between S4 and S5 is involved in control of translational fidelity.

The protein localises to the plastid. The protein resides in the chloroplast. One of the primary rRNA binding proteins, it binds directly to 16S rRNA where it nucleates assembly of the body of the 30S subunit. Functionally, with S5 and S12 plays an important role in translational accuracy. The sequence is that of Small ribosomal subunit protein uS4c (rps4) from Lopidium struthiopteris (Moss).